A 449-amino-acid chain; its full sequence is UDP-glycosyltransferase 76E6 (449 aa).

Residues Ser-274, 333–335 (APQ), 350–358 (HCGWNSTLE), and 372–375 (HGEQ) contribute to the UDP-alpha-D-glucose site.

The protein belongs to the UDP-glycosyltransferase family.

This Arabidopsis thaliana (Mouse-ear cress) protein is UDP-glycosyltransferase 76E6 (UGT76E6).